Reading from the N-terminus, the 264-residue chain is Putative hydro-lyase Bpet2233 (264 aa).

It belongs to the D-glutamate cyclase family.

The protein is Putative hydro-lyase Bpet2233 of Bordetella petrii (strain ATCC BAA-461 / DSM 12804 / CCUG 43448).